The following is a 455-amino-acid chain: GTPase Der (455 aa).

2 EngA-type G domains span residues 3–167 and 184–359; these read FTIA…PEPA and IRVA…AVWN. Residues 9-16, 56-60, 119-122, 190-197, 237-241, and 302-305 each bind GTP; these read GRPNVGKS, DTAGL, NKSE, GRPNAGKS, and NKWD. A KH-like domain is found at 360 to 444; it reads RRVATALLNR…PIRITLREKA (85 aa).

Belongs to the TRAFAC class TrmE-Era-EngA-EngB-Septin-like GTPase superfamily. EngA (Der) GTPase family. Associates with the 50S ribosomal subunit.

Functionally, GTPase that plays an essential role in the late steps of ribosome biogenesis. The sequence is that of GTPase Der from Nitrobacter winogradskyi (strain ATCC 25391 / DSM 10237 / CIP 104748 / NCIMB 11846 / Nb-255).